The following is a 114-amino-acid chain: ATP synthase epsilon chain (114 aa).

It belongs to the ATPase epsilon chain family. In terms of assembly, F-type ATPases have 2 components, CF(1) - the catalytic core - and CF(0) - the membrane proton channel. CF(1) has five subunits: alpha(3), beta(3), gamma(1), delta(1), epsilon(1). CF(0) has three main subunits: a, b and c.

Its subcellular location is the cell membrane. Produces ATP from ADP in the presence of a proton gradient across the membrane. The polypeptide is ATP synthase epsilon chain (Wolbachia pipientis wMel).